The sequence spans 230 residues: Large ribosomal subunit protein uL1 (230 aa).

This sequence belongs to the universal ribosomal protein uL1 family. Part of the 50S ribosomal subunit.

In terms of biological role, binds directly to 23S rRNA. The L1 stalk is quite mobile in the ribosome, and is involved in E site tRNA release. Protein L1 is also a translational repressor protein, it controls the translation of the L11 operon by binding to its mRNA. This is Large ribosomal subunit protein uL1 from Thermoanaerobacter sp. (strain X514).